Reading from the N-terminus, the 412-residue chain is Interferon-inducible GTPase 5 (412 aa).

Positions 51-234 (TRLEVGVTGE…PMLVTTWEHD (184 aa)) constitute an IRG-type G domain. Residues 60–67 (ESGAGKSS), 85–89 (TGVVE), and 215–217 (SNL) contribute to the GTP site. Phosphoserine is present on residues Ser246 and Ser303.

It belongs to the TRAFAC class dynamin-like GTPase superfamily. IRG family. As to quaternary structure, interacts with PLIN2/ADRP and COX4I1/COXIV. Expressed in spermatozoa tails from the testis and epididymis, where it may be a component of the fibrous sheath (at protein level).

It localises to the cell projection. Its subcellular location is the cilium. The protein localises to the flagellum. The protein resides in the lipid droplet. It catalyses the reaction GTP + H2O = GDP + phosphate + H(+). In terms of biological role, required for sperm motility and therefore male fertility, via positive regulation of spermatozoa fibrous sheath formation. The protein is Interferon-inducible GTPase 5 of Mus musculus (Mouse).